Here is a 210-residue protein sequence, read N- to C-terminus: Putative Dihydrofolate reductase (210 aa).

In terms of domain architecture, DHFR spans T4–K184.

Belongs to the dihydrofolate reductase family.

It carries out the reaction (6S)-5,6,7,8-tetrahydrofolate + NADP(+) = 7,8-dihydrofolate + NADPH + H(+). This chain is Putative Dihydrofolate reductase (ORF2), found in Human herpesvirus 8 type P (isolate GK18) (HHV-8).